We begin with the raw amino-acid sequence, 640 residues long: Chaperone protein HtpG (640 aa).

Residues 1 to 348 (MAQYKFETEV…SEDLPLNVSR (348 aa)) form an a; substrate-binding region. The tract at residues 349 to 565 (EILQQNRILS…ETDPSLQMER (217 aa)) is b. Residues 566-640 (MMRAMGQFNT…RLNRLMTNLK (75 aa)) are c.

This sequence belongs to the heat shock protein 90 family. Homodimer.

Its subcellular location is the cytoplasm. In terms of biological role, molecular chaperone. Has ATPase activity. This chain is Chaperone protein HtpG, found in Treponema denticola (strain ATCC 35405 / DSM 14222 / CIP 103919 / JCM 8153 / KCTC 15104).